Here is a 262-residue protein sequence, read N- to C-terminus: Type III pantothenate kinase (262 aa).

Residue D6 to V13 participates in ATP binding. Substrate-binding positions include Y100 and G107 to R110. Residue D109 is the Proton acceptor of the active site. D129 provides a ligand contact to K(+). T132 provides a ligand contact to ATP. T184 serves as a coordination point for substrate.

The protein belongs to the type III pantothenate kinase family. In terms of assembly, homodimer. It depends on NH4(+) as a cofactor. K(+) is required as a cofactor.

It localises to the cytoplasm. It carries out the reaction (R)-pantothenate + ATP = (R)-4'-phosphopantothenate + ADP + H(+). The protein operates within cofactor biosynthesis; coenzyme A biosynthesis; CoA from (R)-pantothenate: step 1/5. Functionally, catalyzes the phosphorylation of pantothenate (Pan), the first step in CoA biosynthesis. This chain is Type III pantothenate kinase, found in Bacillus cereus (strain G9842).